The sequence spans 239 residues: MNIALLGYGRMGQTIEEISKNRDHKIVFKLDDDIENHDLNDFEIDVAIDFSVPKAAFKNITTCFKHAIPVVSGTTGWLDDYAKAREICKKEDSAFIYASNFSLGVNVFFELNQKLAGMMQGLEDYSVDIEEIHHLQKLDSPSGTAITLAQQILEQNSKLKGWQLDEADEDEIPIHAKREENVPGTHTVTYESSIDKIEITHTAKSRQGFALGAVVAAEYLKDKTGIFTMKDVLSDLFKN.

Residues D32, 73–75 (GTT), and 98–101 (ASNF) each bind NAD(+). Catalysis depends on H133, which acts as the Proton donor/acceptor. A (S)-2,3,4,5-tetrahydrodipicolinate-binding site is contributed by H134. The active-site Proton donor is K137. Residue 143-144 (GT) coordinates (S)-2,3,4,5-tetrahydrodipicolinate.

This sequence belongs to the DapB family.

It is found in the cytoplasm. It carries out the reaction (S)-2,3,4,5-tetrahydrodipicolinate + NAD(+) + H2O = (2S,4S)-4-hydroxy-2,3,4,5-tetrahydrodipicolinate + NADH + H(+). The enzyme catalyses (S)-2,3,4,5-tetrahydrodipicolinate + NADP(+) + H2O = (2S,4S)-4-hydroxy-2,3,4,5-tetrahydrodipicolinate + NADPH + H(+). It functions in the pathway amino-acid biosynthesis; L-lysine biosynthesis via DAP pathway; (S)-tetrahydrodipicolinate from L-aspartate: step 4/4. In terms of biological role, catalyzes the conversion of 4-hydroxy-tetrahydrodipicolinate (HTPA) to tetrahydrodipicolinate. This chain is 4-hydroxy-tetrahydrodipicolinate reductase, found in Christiangramia forsetii (strain DSM 17595 / CGMCC 1.15422 / KT0803) (Gramella forsetii).